The primary structure comprises 137 residues: Basic phospholipase A2 homolog Pgo-K49 (137 aa).

The N-terminal stretch at 1–16 (MRTLLIVAVLLVGVEG) is a signal peptide. Cystine bridges form between Cys42–Cys131, Cys44–Cys60, Cys59–Cys111, Cys65–Cys137, Cys66–Cys104, Cys73–Cys97, and Cys91–Cys102. The interval 121-133 (KKYKIHMKFFCKK) is important for membrane-damaging activities in eukaryotes and bacteria; heparin-binding.

As to expression, expressed by the venom gland.

The protein resides in the secreted. In terms of biological role, snake venom phospholipase A2 homolog that lacks enzymatic activity. Is myotoxic. A model of myotoxic mechanism has been proposed: an apo Lys49-PLA2 is activated by the entrance of a hydrophobic molecule (e.g. fatty acid) at the hydrophobic channel of the protein leading to a reorientation of a monomer. This reorientation causes a transition between 'inactive' to 'active' states, causing alignment of C-terminal and membrane-docking sites (MDoS) side-by-side and putting the membrane-disruption sites (MDiS) in the same plane, exposed to solvent and in a symmetric position for both monomers. The MDoS region stabilizes the toxin on membrane by the interaction of charged residues with phospholipid head groups. Subsequently, the MDiS region destabilizes the membrane with penetration of hydrophobic residues. This insertion causes a disorganization of the membrane, allowing an uncontrolled influx of ions (i.e. calcium and sodium), and eventually triggering irreversible intracellular alterations and cell death. This chain is Basic phospholipase A2 homolog Pgo-K49, found in Cerrophidion godmani (Porthidium godmani).